A 458-amino-acid polypeptide reads, in one-letter code: O-acetyltransferase dmxR13 (458 aa).

Residues 211–231 (ELARQISQPRPPPSSDGPPPP) are disordered. Positions 219–231 (PRPPPSSDGPPPP) are enriched in pro residues.

This sequence belongs to the trichothecene 3-O-acetyltransferase family.

It participates in secondary metabolite biosynthesis. Functionally, O-acetyltransferase; part of the gene cluster that mediates the biosynthesis of the dimeric xanthones cryptosporioptides. The pathway begins with the synthesis of atrochrysone thioester by the polyketide synthase dmx-nrPKS. The atrochrysone carboxyl ACP thioesterase dmxR1 then breaks the thioester bond and releases the atrochrysone carboxylic acid from dmx-nrPKS. Atrochrysone carboxylic acid is decarboxylated by the decarboxylase dmxR15, and oxidized by the anthrone oxygenase dmxR16 to yield emodin. Emodin is then reduced to emodin hydroquinone by the oxidoreductase dmxR7. A-ring reduction by the short chain dehydrogenase dmxR18, dehydration by the scytalone dehydratase-like protein dmxR17 and probable spontaneous re-oxidation, results in overall deoxygenation to chrysophanol. Baeyer-Villiger oxidation by the Baeyer-Villiger monooxygenase (BVMO) dmxR6 then yields monodictylactone in equilibrium with monodictyphenone. In the case of the cryptosporioptides biosynthesis, monodictylactone is reduced at C-12 to an alcohol (by the short chain dehydrogenases dmxR12 or dmxR8) and hydroxylated at C-5 by dmxR9, yielding the electron-rich aromatic which could eliminate H(2)O to form the ortho-quinonemethide, followed by tautomerisation to paraquinone and complete the formal reduction to produce the 10-methylgroup. Conjugate addition of C-4a-OH to the resulting paraquinone by the monooxygenase dmxR10 then gives cyclohexadienone, which is then reduced at C-5 by the short chain dehydrogenase dmxR3 to give the dihydroxanthone. The 6,7-epoxide in the cryptosporioptides could be introduced by the cytochrome P450 monooxygenase dmxL3. The highly reducing PKS dmxL2 manufactures butyrate, which is further carboxylated by dmxL1 to form ethylmalonate. It is not yet clear whether the carboxylation occurs while the butyrate is attached to the ACP of dmxL2, but this unusual fungal metabolite could then be esterified to O-5 by the O-acetyltransferase dmxR13. Finally, dimerization performed by dmxR5 gives the observed dimers cryptosporioptides A, B and C as the final products of the pathway. This is O-acetyltransferase dmxR13 from Cryptosporiopsis sp. (strain 8999).